A 499-amino-acid polypeptide reads, in one-letter code: Pentatricopeptide repeat-containing protein PPR5, chloroplastic (499 aa).

Over residues 1 to 12 (MLACPSTSSPWP) the composition is skewed to low complexity. A disordered region spans residues 1–28 (MLACPSTSSPWPQRQPPSPCPGGGGGAT). The transit peptide at 1–45 (MLACPSTSSPWPQRQPPSPCPGGGGGATRHVALAARSKRRGAGPA) directs the protein to the chloroplast. PPR repeat units follow at residues 123 to 157 (DNGIYSKLISVMGRKGQIRMAMWLFSQMRNSGCKP), 158 to 193 (DTSVYNSLIGAHLHSRDKTKALAKALGYFEKMKCIE), 198 to 232 (TIVTYNILLRAFAQAGDTKQVDMLFKDLDESVVSP), 233 to 267 (DVYTYNGVLDAYGKNGMIKEMESVLVRMKSTQCRP), 268 to 302 (DVITFNILIDSYGRKQTFDKMEQVFKSLLRSKERP), 303 to 337 (THPTFNSMITNYGRARLREKAESVVEKMEELGFKP), 338 to 372 (NYVTQECLIIMYAHCDCVSKARQVFDELVTSQTKV), 373 to 407 (HLSSLNSMLEAYCMNGLHTEADRLLDTALQQCVVP), and 408 to 442 (NGSTYKLLYKAYTKANDKLLVQKLLKRMNKQGIVP). A disordered region spans residues 458 to 499 (DRKPRTSPGINSASKPSTDSAGDSETATSDKPEVSVWHVAAT). The segment covering 465 to 484 (PGINSASKPSTDSAGDSETA) has biased composition (polar residues).

It belongs to the PPR family. P subfamily.

The protein localises to the plastid. It is found in the chloroplast. In terms of biological role, involved in the biogenesis of the plastid translation machinery by promoting the splicing of group II introns in chloroplasts. Stabilizes the chloroplast trnG pre-RNA by directly binding to a group II intron, where it protects an endonuclease-sensitive site and stimulates splicing. Binds specific sites within group II intron trnG pre-RNA. Binds with high affinity to the 5'-UTR of the chloroplastic petA mRNA. This Zea mays (Maize) protein is Pentatricopeptide repeat-containing protein PPR5, chloroplastic.